The chain runs to 201 residues: MAQSEDPEDFIAPAAHRVRPGTLLLANTDLLEPTFRRTVIYIVEHNSGGTLGVILNRPSETAVYNVLPQWAEVTAKPKTMFIGGPVKRDSALCLATLRVGMQADGVDGLRHVQGRVVMVDLDADPEELAPVIEGVRIFAGYSGWTTGQLDGEIERDDWIVLSALPSDVLIEPRIDLWGRVLRRQPLPMSLLATHPIDVSRN.

The protein belongs to the UPF0301 (AlgH) family.

This chain is UPF0301 protein MSMEG_6921/MSMEI_6732, found in Mycolicibacterium smegmatis (strain ATCC 700084 / mc(2)155) (Mycobacterium smegmatis).